Here is a 989-residue protein sequence, read N- to C-terminus: Mediator of RNA polymerase II transcription subunit 24 (989 aa).

Short sequence motifs (LXXLL motif) lie at residues 128–132 (LHWLL), 344–348 (LTPLL), 448–452 (LDLLL), 557–561 (LVALL), 788–792 (LPGLL), and 857–861 (LMRLL). Residues serine 862 and serine 873 each carry the phosphoserine modification.

This sequence belongs to the Mediator complex subunit 24 family. Component of the Mediator complex, which is composed of MED1, MED4, MED6, MED7, MED8, MED9, MED10, MED11, MED12, MED13, MED13L, MED14, MED15, MED16, MED17, MED18, MED19, MED20, MED21, MED22, MED23, MED24, MED25, MED26, MED27, MED29, MED30, MED31, CCNC, CDK8 and CDC2L6/CDK11. The MED12, MED13, CCNC and CDK8 subunits form a distinct module termed the CDK8 module. Mediator containing the CDK8 module is less active than Mediator lacking this module in supporting transcriptional activation. Individual preparations of the Mediator complex lacking one or more distinct subunits have been variously termed ARC, CRSP, DRIP, PC2, SMCC and TRAP. Interacts with AR. In terms of tissue distribution, ubiquitous. Abundant in skeletal muscle, heart and placenta.

The protein resides in the nucleus. In terms of biological role, component of the Mediator complex, a coactivator involved in the regulated transcription of nearly all RNA polymerase II-dependent genes. Mediator functions as a bridge to convey information from gene-specific regulatory proteins to the basal RNA polymerase II transcription machinery. Mediator is recruited to promoters by direct interactions with regulatory proteins and serves as a scaffold for the assembly of a functional preinitiation complex with RNA polymerase II and the general transcription factors. The sequence is that of Mediator of RNA polymerase II transcription subunit 24 (MED24) from Homo sapiens (Human).